A 193-amino-acid polypeptide reads, in one-letter code: MLTQEQDQQLVERVQRGDKRAFDLLVLKYQHKILGLIVRFVHDAQEAQDVAQEAFIKAYRALGNFRGDSAFYTWLYRIAINTAKNHLVARGRRPPDSDVTAEDAEFFEGDHALKDIESPERAMLRDEIEATVHQTIQQLPEDLRTALTLREFEGLSYEDIATVMQCPVGTVRSRIFRAREAIDKALQPLLREA.

The Polymerase core binding signature appears at 49-62 (DVAQEAFIKAYRAL). Residues 157–176 (YEDIATVMQCPVGTVRSRIF) constitute a DNA-binding region (H-T-H motif).

It belongs to the sigma-70 factor family. ECF subfamily.

In terms of biological role, sigma factors are initiation factors that promote the attachment of RNA polymerase to specific initiation sites and are then released. This sigma factor regulates genes such as algD, involved in alginate biosynthesis. The sequence is that of RNA polymerase sigma-H factor (algU) from Pseudomonas aeruginosa (strain ATCC 15692 / DSM 22644 / CIP 104116 / JCM 14847 / LMG 12228 / 1C / PRS 101 / PAO1).